A 352-amino-acid polypeptide reads, in one-letter code: MLPSISINNTSAAYPESINENNNDEINGLVQEFKNLFNGKEGISTCIKHLLELIKNAIRVNDDPYRSNINNPSVTYIDIGSNDTDHITIGIDNQEPIELPANYKDKELVRTIINDNIVEKTHDINNKEMIFSALKEIYDGDPGFIFDKISHKLRHTVTEFDESGKSEPTDLFTWYGKDKKGDSLAIVIKNKNGNDYLSLGYYDQDDYHIQRGIRINGDSLTQYCSENARSASAWFESSKAIMAESFATGSDHQVVNELNGERLREPNEVFKRLGRAIRYNFQVDDAKFRRDNVKEIISTLFANKVDVDHPENKYKDFKNLEDKVEKRLQNRQTKYQNEINQLSALGVNFDDI.

Belongs to the IcaT/YfdF family.

The protein resides in the secreted. In terms of biological role, may contribute to pathogenesis, although some of its characteristics suggest it is a fossil gene. This is Invasion chromosome antigen T from Shigella flexneri serotype 5a (strain M90T).